Consider the following 315-residue polypeptide: Methionyl-tRNA formyltransferase (315 aa).

113-116 (SLLP) provides a ligand contact to (6S)-5,6,7,8-tetrahydrofolate.

Belongs to the Fmt family.

The catalysed reaction is L-methionyl-tRNA(fMet) + (6R)-10-formyltetrahydrofolate = N-formyl-L-methionyl-tRNA(fMet) + (6S)-5,6,7,8-tetrahydrofolate + H(+). Its function is as follows. Attaches a formyl group to the free amino group of methionyl-tRNA(fMet). The formyl group appears to play a dual role in the initiator identity of N-formylmethionyl-tRNA by promoting its recognition by IF2 and preventing the misappropriation of this tRNA by the elongation apparatus. This Enterobacter sp. (strain 638) protein is Methionyl-tRNA formyltransferase.